The following is a 720-amino-acid chain: Nucleolar protein 11 (720 aa).

Residues 365–392 (KDPETKPSNAGAQKKTRERKTNANAGNG) form a disordered region.

Its subcellular location is the nucleus. The protein resides in the nucleolus. Its function is as follows. Ribosome biogenesis factor. May be required for both optimal rDNA transcription and pre-rRNA processing. The polypeptide is Nucleolar protein 11 (nol11) (Xenopus laevis (African clawed frog)).